A 305-amino-acid polypeptide reads, in one-letter code: Serine/threonine-protein phosphatase PP2A catalytic subunit (305 aa).

Mn(2+) contacts are provided by aspartate 53, histidine 55, aspartate 81, and asparagine 113. The active-site Proton donor is histidine 114. Residues histidine 163 and histidine 237 each contribute to the Mn(2+) site.

Belongs to the PPP phosphatase family. PP-2A subfamily. Requires Mn(2+) as cofactor.

It carries out the reaction O-phospho-L-seryl-[protein] + H2O = L-seryl-[protein] + phosphate. It catalyses the reaction O-phospho-L-threonyl-[protein] + H2O = L-threonyl-[protein] + phosphate. This is Serine/threonine-protein phosphatase PP2A catalytic subunit from Helianthus annuus (Common sunflower).